We begin with the raw amino-acid sequence, 273 residues long: 4-hydroxy-tetrahydrodipicolinate reductase (273 aa).

NAD(+) contacts are provided by residues 12–17 (GAGGRM) and E38. Residue R39 coordinates NADP(+). Residues 102-104 (GTT) and 126-129 (AANF) contribute to the NAD(+) site. H159 acts as the Proton donor/acceptor in catalysis. H160 serves as a coordination point for (S)-2,3,4,5-tetrahydrodipicolinate. K163 acts as the Proton donor in catalysis. (S)-2,3,4,5-tetrahydrodipicolinate is bound at residue 169–170 (GT).

Belongs to the DapB family. As to quaternary structure, homotetramer.

It is found in the cytoplasm. It catalyses the reaction (S)-2,3,4,5-tetrahydrodipicolinate + NAD(+) + H2O = (2S,4S)-4-hydroxy-2,3,4,5-tetrahydrodipicolinate + NADH + H(+). The catalysed reaction is (S)-2,3,4,5-tetrahydrodipicolinate + NADP(+) + H2O = (2S,4S)-4-hydroxy-2,3,4,5-tetrahydrodipicolinate + NADPH + H(+). It participates in amino-acid biosynthesis; L-lysine biosynthesis via DAP pathway; (S)-tetrahydrodipicolinate from L-aspartate: step 4/4. In terms of biological role, catalyzes the conversion of 4-hydroxy-tetrahydrodipicolinate (HTPA) to tetrahydrodipicolinate. The sequence is that of 4-hydroxy-tetrahydrodipicolinate reductase from Yersinia pestis bv. Antiqua (strain Antiqua).